A 320-amino-acid polypeptide reads, in one-letter code: Pyrroline-5-carboxylate reductase 2 (320 aa).

An N-acetylserine modification is found at Ser2. NADP(+) is bound by residues 6–11 (IGAGQL) and Ser34. NADPH contacts are provided by Ala8, Gln10, Leu11, Ser34, Glu36, Asn56, Val70, Lys71, and Ala97. NADP(+) contacts are provided by residues Asn56, 69–72 (AVKP), and 95–97 (CAA). Glu164 lines the L-proline pocket. Residue Asn230 coordinates NADPH. Residues Ala237 and Thr238 each coordinate L-proline. The tract at residues 298–320 (TTLTPTSSGKLLTRSPVPGGKKD) is disordered. Ser304 carries the post-translational modification Phosphoserine.

Belongs to the pyrroline-5-carboxylate reductase family. As to quaternary structure, homodecamer; composed of 5 homodimers. Interacts with LTO1.

It is found in the cytoplasm. Its subcellular location is the mitochondrion. The catalysed reaction is L-proline + NADP(+) = (S)-1-pyrroline-5-carboxylate + NADPH + 2 H(+). It carries out the reaction L-proline + NAD(+) = (S)-1-pyrroline-5-carboxylate + NADH + 2 H(+). It functions in the pathway amino-acid biosynthesis; L-proline biosynthesis; L-proline from L-glutamate 5-semialdehyde: step 1/1. In terms of biological role, oxidoreductase that catalyzes the last step in proline biosynthesis, which corresponds to the reduction of pyrroline-5-carboxylate to L-proline using NAD(P)H. At physiologic concentrations, has higher specific activity in the presence of NADH. Involved in cellular response to oxidative stress. In some cell types, such as erythrocytes, its primary function may be the generation of NADP(+). This is Pyrroline-5-carboxylate reductase 2 (PYCR2) from Bos taurus (Bovine).